Reading from the N-terminus, the 928-residue chain is Putative replication origin binding protein (928 aa).

Residues N386 to A516 enclose the Helicase ATP-binding domain. A399–T406 is an ATP binding site. The DEAD box signature appears at D484–D487.

It belongs to the herpesviridae oribp family.

Functionally, displays bipolar ssDNA and dsDNA unwinding activities that require the same core catalytic residues for unwinding in either direction, the 3'-5' direction being more robust. The chain is Putative replication origin binding protein from Escherichia coli (Enterobacteria phage T5).